The following is a 367-amino-acid chain: Glutamate 5-kinase (367 aa).

Lys-10 contacts ATP. 3 residues coordinate substrate: Ser-50, Asp-137, and Asn-149. Residues 169–170 (TD) and 211–217 (TGGMSTK) contribute to the ATP site. Positions 275 to 353 (AGEITVDEGA…QEIDAILGYE (79 aa)) constitute a PUA domain.

Belongs to the glutamate 5-kinase family.

Its subcellular location is the cytoplasm. The catalysed reaction is L-glutamate + ATP = L-glutamyl 5-phosphate + ADP. The protein operates within amino-acid biosynthesis; L-proline biosynthesis; L-glutamate 5-semialdehyde from L-glutamate: step 1/2. Catalyzes the transfer of a phosphate group to glutamate to form L-glutamate 5-phosphate. In Shigella flexneri, this protein is Glutamate 5-kinase.